The chain runs to 150 residues: UPF0756 membrane protein PC1_1142 (150 aa).

The next 4 helical transmembrane spans lie at 1–21, 51–71, 82–102, and 127–147; these read MAYL…GIIS, YGLS…IASG, FLHW…WLGG, and ALFR…SLLI.

This sequence belongs to the UPF0756 family.

The protein localises to the cell membrane. This is UPF0756 membrane protein PC1_1142 from Pectobacterium carotovorum subsp. carotovorum (strain PC1).